Consider the following 481-residue polypeptide: Glutamate--glyoxylate aminotransferase 1 (481 aa).

Position 291 is an N6-(pyridoxal phosphate)lysine (K291). Residues 479–481 (SKM) carry the Peroxisomal targeting signal motif.

Belongs to the class-I pyridoxal-phosphate-dependent aminotransferase family. Alanine aminotransferase subfamily. In terms of assembly, homodimer. Pyridoxal 5'-phosphate serves as cofactor. The N-terminus is blocked. In terms of tissue distribution, mostly expressed in leaves, and, to a lower extent, in shoots, stems, flowers, seedlings and green siliques.

Its subcellular location is the peroxisome. The catalysed reaction is L-alanine + 2-oxoglutarate = pyruvate + L-glutamate. It carries out the reaction glyoxylate + L-alanine = glycine + pyruvate. The enzyme catalyses glycine + 2-oxoglutarate = glyoxylate + L-glutamate. Its pathway is amino-acid biosynthesis; glycine biosynthesis; glycine from glyoxylate: step 1/1. It functions in the pathway photosynthesis; C4 acid pathway. It participates in amino-acid degradation; L-alanine degradation via transaminase pathway; pyruvate from L-alanine: step 1/1. Functionally, catalyzes the glutamate:glyoxylate (GGT or GGAT), alanine:glyoxylate (AGT), alanine:2-oxoglutarate (AKT) and glutamate:pyruvate (GPT) aminotransferase reactions in peroxisomes. Required for abscisic acid (ABA)- and stress-mediated responses in an H(2)O(2)-dependent manner. Functions as a photorespiratory aminotransferase that modulates amino acid content during photorespiration (GGAT activity); promotes serine, glycine and citrulline metabolism in response to light. The chain is Glutamate--glyoxylate aminotransferase 1 (GGAT1) from Arabidopsis thaliana (Mouse-ear cress).